Here is a 670-residue protein sequence, read N- to C-terminus: Putative segment polarity protein dishevelled homolog DVL1P1 (670 aa).

Residues 1-85 (MAETKIIYHM…RVVSWLVLVE (85 aa)) form the DIX domain. The tract at residues 89–240 (SDAGSQGTDS…ADRASSFSSM (152 aa)) is disordered. The span at 142–151 (SHRRDRARRR) shows a compositional bias: basic residues. The segment covering 152 to 171 (NREEAARTNGHPRGDRRRDV) has biased composition (basic and acidic residues). Composition is skewed to low complexity over residues 176–192 (DSAS…SSFV) and 201–214 (SRLS…TSSR). Residues 215-228 (LIRKHKRRRRKQRL) are compositionally biased toward basic residues. In terms of domain architecture, PDZ spans 251–323 (TVTLNMERHH…NDDAVRVLRE (73 aa)). The region spanning 400 to 474 (PDSGLEIRDR…SEQCYYVFGD (75 aa)) is the DEP domain. Positions 518 to 642 (PGPPPCFPPA…PGGPPVRELA (125 aa)) are disordered. Composition is skewed to low complexity over residues 526-553 (PAYQ…SSGS) and 600-614 (SRGS…SYAP).

It belongs to the DSH family. In terms of tissue distribution, expressed in thymus, heart, liver, kidney, brain, skeletal muscle, and pancreas.

It localises to the cytoplasm. Its function is as follows. May play a role in the signal transduction pathway mediated by multiple Wnt genes. The chain is Putative segment polarity protein dishevelled homolog DVL1P1 (DVL1P1) from Homo sapiens (Human).